Consider the following 631-residue polypeptide: Probable potassium transport system protein Kup 1 (631 aa).

12 consecutive transmembrane segments (helical) span residues 17–37, 55–75, 101–121, 140–160, 166–186, 217–237, 249–269, 277–297, 338–358, 370–390, 395–415, and 420–440; these read LALGALGVVFGDIGTSPLYAL, LSLIFWSLIIVVSFKYLMIIF, PLFYIVAIFGAGLLLGDGMLT, LYPYVLPIASVILVLLFSLQA, IGYLFGPLILIWFITIAILGI, FLLGGIFLVVTGGEALFADIG, FFIALPCLLLNYFGQGANLIV, PFFMIAPPWFYLPLIIIATVA, IYVPQINFILFIGTMAFCLAF, IAVNLEMLLVDAMVAYAAVSI, TFNVIFLFGLFLLIDLAFLGA, and FITGGWVPIVLAFVIAFIMYS.

Belongs to the HAK/KUP transporter (TC 2.A.72) family.

It localises to the cell inner membrane. The enzyme catalyses K(+)(in) + H(+)(in) = K(+)(out) + H(+)(out). Functionally, transport of potassium into the cell. Likely operates as a K(+):H(+) symporter. The chain is Probable potassium transport system protein Kup 1 from Legionella pneumophila (strain Corby).